A 989-amino-acid chain; its full sequence is Presequence protease, mitochondrial (989 aa).

Residues 1 to 16 constitute a mitochondrion transit peptide; that stretch reads MLRFQRFASSYAQAQA. Residue histidine 84 coordinates Zn(2+). Glutamate 87 (proton acceptor) is an active-site residue. Histidine 88 is a Zn(2+) binding site. Glutamate 160 is a catalytic residue. Glutamate 185 is a Zn(2+) binding site. The residue at position 920 (serine 920) is a Phosphoserine. 972 to 979 is a binding site for ATP; that stretch reads GPGIEGKT.

This sequence belongs to the peptidase M16 family. PreP subfamily. Monomer and homodimer; homodimerization is induced by binding of the substrate. It depends on Zn(2+) as a cofactor.

The protein resides in the mitochondrion intermembrane space. It localises to the mitochondrion matrix. Its activity is regulated as follows. Activated by nucleotides, including ATP, GTP, CTP, UTP, and ADP. Activated by copper, manganese, calcium and magnesium ions; copper and manganese restore activity following inactivation by EDTA (ethylenediaminetetraacetic acid). Inhibited by metal chelators including EDTA, EGTA (ethylene glycol bis(2-aminoethyl)tetraacetic acid), and 1,10-phenanthroline. Inhibited by copper, zinc, and iron ions. Also inhibited by dithiothreitol p-mercuribenzenesulfonic acid, N-ethylmaleimide, protoporphyrin, hemin, protamine and triarginine. Degrades mitochondrial transit peptides after their cleavage in the intermembrane space or in the matrix, and presequence peptides; clearance of these peptides is required to keep the presequence processing machinery running. Preferentially cleaves the N-terminal side of paired basic amino acid residues. Also degrades other unstructured peptides. May function as an ATP-dependent peptidase as opposed to a metalloendopeptidase. The sequence is that of Presequence protease, mitochondrial from Saccharomyces cerevisiae (strain ATCC 204508 / S288c) (Baker's yeast).